A 198-amino-acid polypeptide reads, in one-letter code: Ribonuclease HII (198 aa).

The RNase H type-2 domain occupies 5 to 195 (LRVAGVDEAG…VKAWLASHQG (191 aa)). Residues Asp-11, Glu-12, and Asp-103 each contribute to the a divalent metal cation site.

It belongs to the RNase HII family. Mn(2+) serves as cofactor. Requires Mg(2+) as cofactor.

It localises to the cytoplasm. It catalyses the reaction Endonucleolytic cleavage to 5'-phosphomonoester.. In terms of biological role, endonuclease that specifically degrades the RNA of RNA-DNA hybrids. The chain is Ribonuclease HII from Chromobacterium violaceum (strain ATCC 12472 / DSM 30191 / JCM 1249 / CCUG 213 / NBRC 12614 / NCIMB 9131 / NCTC 9757 / MK).